Reading from the N-terminus, the 374-residue chain is Putative F-box protein At3g17480 (374 aa).

The F-box domain maps to 6 to 52; it reads SSPMSVLTEDLVEDILSRVPATSLVRLRSTCKQWNAILNDRRFIKKH.

The polypeptide is Putative F-box protein At3g17480 (Arabidopsis thaliana (Mouse-ear cress)).